A 337-amino-acid chain; its full sequence is Phosphate acyltransferase (337 aa).

The protein belongs to the PlsX family. As to quaternary structure, homodimer. Probably interacts with PlsY.

It localises to the cytoplasm. It catalyses the reaction a fatty acyl-[ACP] + phosphate = an acyl phosphate + holo-[ACP]. It functions in the pathway lipid metabolism; phospholipid metabolism. Functionally, catalyzes the reversible formation of acyl-phosphate (acyl-PO(4)) from acyl-[acyl-carrier-protein] (acyl-ACP). This enzyme utilizes acyl-ACP as fatty acyl donor, but not acyl-CoA. This is Phosphate acyltransferase from Listeria innocua serovar 6a (strain ATCC BAA-680 / CLIP 11262).